Reading from the N-terminus, the 291-residue chain is 4-hydroxy-tetrahydrodipicolinate synthase (291 aa).

Pyruvate is bound at residue T44. Y132 (proton donor/acceptor) is an active-site residue. The Schiff-base intermediate with substrate role is filled by K160. I202 is a binding site for pyruvate.

Belongs to the DapA family. As to quaternary structure, homotetramer; dimer of dimers.

The protein resides in the cytoplasm. The enzyme catalyses L-aspartate 4-semialdehyde + pyruvate = (2S,4S)-4-hydroxy-2,3,4,5-tetrahydrodipicolinate + H2O + H(+). It participates in amino-acid biosynthesis; L-lysine biosynthesis via DAP pathway; (S)-tetrahydrodipicolinate from L-aspartate: step 3/4. Catalyzes the condensation of (S)-aspartate-beta-semialdehyde [(S)-ASA] and pyruvate to 4-hydroxy-tetrahydrodipicolinate (HTPA). The protein is 4-hydroxy-tetrahydrodipicolinate synthase of Syntrophus aciditrophicus (strain SB).